The following is a 430-amino-acid chain: MLMNNADVRSQERKQVMVCARAAHRVAPIVAQLTSADKNAVLLDAAAALEAAGAEIIAANQRDIDQGRARGLSEALIDRLSLDSARIAGIAGGLRQVAALSDPVGEVVGGSVMPNGMQMRKVRVPLGVMGMVYEARPNVTIDAFGLALKSGNVALLRGSKSAQHSNAALVAVVHRVLESHGLPHEVVQLLPCETHESVQDLITARGLVDVVIPRGGAGLIEAVVTNATVPTIETGTGNCHFYIDRDVSDLDQAIAMLLNGKTRRCSVCNATETVLIDSALDSAYQLAIITALQEAGVTVHGDVAQLEAVGASGIVPADEHDWAEEYLSLDIACALVDGVDAAMEHIRTYSTKHTEAIATGNIVTAQRFADRVDAAAVMINASTAFTDGEQFGMGAEIGISTQKLHARGPMALPELTTTKWIVQGTGQTRP.

This sequence belongs to the gamma-glutamyl phosphate reductase family.

The protein localises to the cytoplasm. It carries out the reaction L-glutamate 5-semialdehyde + phosphate + NADP(+) = L-glutamyl 5-phosphate + NADPH + H(+). It participates in amino-acid biosynthesis; L-proline biosynthesis; L-glutamate 5-semialdehyde from L-glutamate: step 2/2. In terms of biological role, catalyzes the NADPH-dependent reduction of L-glutamate 5-phosphate into L-glutamate 5-semialdehyde and phosphate. The product spontaneously undergoes cyclization to form 1-pyrroline-5-carboxylate. The polypeptide is Gamma-glutamyl phosphate reductase (Corynebacterium diphtheriae (strain ATCC 700971 / NCTC 13129 / Biotype gravis)).